The primary structure comprises 237 residues: Pyridoxine 5'-phosphate synthase (237 aa).

Residues Asn-7 and Arg-18 each coordinate 3-amino-2-oxopropyl phosphate. Residue His-43 is the Proton acceptor of the active site. The 1-deoxy-D-xylulose 5-phosphate site is built by Arg-45 and His-50. Catalysis depends on Glu-70, which acts as the Proton acceptor. Thr-100 provides a ligand contact to 1-deoxy-D-xylulose 5-phosphate. Catalysis depends on His-190, which acts as the Proton donor. 3-amino-2-oxopropyl phosphate contacts are provided by residues Asp-191 and 213-214 (GH).

It belongs to the PNP synthase family. In terms of assembly, homooctamer; tetramer of dimers.

The protein localises to the cytoplasm. The catalysed reaction is 3-amino-2-oxopropyl phosphate + 1-deoxy-D-xylulose 5-phosphate = pyridoxine 5'-phosphate + phosphate + 2 H2O + H(+). The protein operates within cofactor biosynthesis; pyridoxine 5'-phosphate biosynthesis; pyridoxine 5'-phosphate from D-erythrose 4-phosphate: step 5/5. Its function is as follows. Catalyzes the complicated ring closure reaction between the two acyclic compounds 1-deoxy-D-xylulose-5-phosphate (DXP) and 3-amino-2-oxopropyl phosphate (1-amino-acetone-3-phosphate or AAP) to form pyridoxine 5'-phosphate (PNP) and inorganic phosphate. The chain is Pyridoxine 5'-phosphate synthase from Flavobacterium johnsoniae (strain ATCC 17061 / DSM 2064 / JCM 8514 / BCRC 14874 / CCUG 350202 / NBRC 14942 / NCIMB 11054 / UW101) (Cytophaga johnsonae).